We begin with the raw amino-acid sequence, 279 residues long: Phenylalanine 3-hydroxylase (279 aa).

Fe cation-binding residues include H140, H145, and E186.

The protein belongs to the biopterin-dependent aromatic amino acid hydroxylase family. The cofactor is Fe(2+).

The catalysed reaction is (6R)-L-erythro-5,6,7,8-tetrahydrobiopterin + L-phenylalanine + O2 = 3-hydroxy-L-phenylalanine + (4aS,6R)-4a-hydroxy-L-erythro-5,6,7,8-tetrahydrobiopterin. Functionally, in vitro, catalyzes the highly regiospecific C-3 hydroxylation of L-phenylalanine (L-Phe) to yield 3-hydroxy-L-phenylalanine (meta-Tyr), an amino acid found in bacterial secondary metabolites such as sanglifehrin A and some pacidamycins. Tetrahydrobiopterin (BH4) seems to be the physiological pterin, however the hydroxylase is also able to use 6-methyltetrahydropterin (6-MePH4). The protein is Phenylalanine 3-hydroxylase of Streptomyces coeruleorubidus.